The following is a 482-amino-acid chain: 23S rRNA (uracil(1939)-C(5))-methyltransferase RlmD (482 aa).

4 residues coordinate [4Fe-4S] cluster: Cys-85, Cys-95, Cys-98, and Cys-177. Positions 285, 314, 319, 335, 370, and 391 each coordinate S-adenosyl-L-methionine. The active-site Nucleophile is Cys-438.

Belongs to the class I-like SAM-binding methyltransferase superfamily. RNA M5U methyltransferase family. RlmD subfamily.

The catalysed reaction is uridine(1939) in 23S rRNA + S-adenosyl-L-methionine = 5-methyluridine(1939) in 23S rRNA + S-adenosyl-L-homocysteine + H(+). Catalyzes the formation of 5-methyl-uridine at position 1939 (m5U1939) in 23S rRNA. This chain is 23S rRNA (uracil(1939)-C(5))-methyltransferase RlmD, found in Acidovorax sp. (strain JS42).